We begin with the raw amino-acid sequence, 457 residues long: uncharacterized protein (457 aa).

A TRAM domain is found at 5 to 63 (PVKKNDVIEVEIIDLTHEGLGVAKVDHYPLFIENALPGEKLEIKVLKTGKSFGYGKVLT). Residues Q287, Y316, E337, and D385 each coordinate S-adenosyl-L-methionine. The active-site Nucleophile is the C412.

Belongs to the class I-like SAM-binding methyltransferase superfamily. RNA M5U methyltransferase family.

This is an uncharacterized protein from Enterococcus faecalis (strain ATCC 700802 / V583).